The following is a 444-amino-acid chain: Phosphoglucosamine mutase (444 aa).

Catalysis depends on Ser102, which acts as the Phosphoserine intermediate. 4 residues coordinate Mg(2+): Ser102, Asp241, Asp243, and Asp245. At Ser102 the chain carries Phosphoserine.

This sequence belongs to the phosphohexose mutase family. It depends on Mg(2+) as a cofactor. Activated by phosphorylation.

It carries out the reaction alpha-D-glucosamine 1-phosphate = D-glucosamine 6-phosphate. In terms of biological role, catalyzes the conversion of glucosamine-6-phosphate to glucosamine-1-phosphate. The polypeptide is Phosphoglucosamine mutase (Histophilus somni (strain 129Pt) (Haemophilus somnus)).